The chain runs to 215 residues: Cytochrome b6 (215 aa).

Residues isoleucine 32–phenylalanine 52 traverse the membrane as a helical segment. Cysteine 35 contacts heme c. Positions 86 and 100 each coordinate heme b. A run of 3 helical transmembrane segments spans residues alanine 90 to phenylalanine 110, leucine 116 to tyrosine 136, and leucine 186 to isoleucine 206. Positions 187 and 202 each coordinate heme b.

Belongs to the cytochrome b family. PetB subfamily. In terms of assembly, the 4 large subunits of the cytochrome b6-f complex are cytochrome b6, subunit IV (17 kDa polypeptide, PetD), cytochrome f and the Rieske protein, while the 4 small subunits are PetG, PetL, PetM and PetN. The complex functions as a dimer. Heme b is required as a cofactor. It depends on heme c as a cofactor.

It localises to the plastid. The protein localises to the chloroplast thylakoid membrane. In terms of biological role, component of the cytochrome b6-f complex, which mediates electron transfer between photosystem II (PSII) and photosystem I (PSI), cyclic electron flow around PSI, and state transitions. The chain is Cytochrome b6 from Pinus koraiensis (Korean pine).